Here is a 102-residue protein sequence, read N- to C-terminus: Small ribosomal subunit protein uS10 (102 aa).

The protein belongs to the universal ribosomal protein uS10 family. As to quaternary structure, part of the 30S ribosomal subunit.

In terms of biological role, involved in the binding of tRNA to the ribosomes. The polypeptide is Small ribosomal subunit protein uS10 (Limosilactobacillus reuteri (strain DSM 20016) (Lactobacillus reuteri)).